The following is a 310-amino-acid chain: tRNA uridine(34) hydroxylase (310 aa).

Residues 124–218 (SDPEVLLIDT…YFEEVAQEES (95 aa)) form the Rhodanese domain. Residue Cys-178 is the Cysteine persulfide intermediate of the active site.

Belongs to the TrhO family.

The enzyme catalyses uridine(34) in tRNA + AH2 + O2 = 5-hydroxyuridine(34) in tRNA + A + H2O. Catalyzes oxygen-dependent 5-hydroxyuridine (ho5U) modification at position 34 in tRNAs. In Pseudomonas entomophila (strain L48), this protein is tRNA uridine(34) hydroxylase.